A 267-amino-acid polypeptide reads, in one-letter code: Acyl-[acyl-carrier-protein]--UDP-N-acetylglucosamine O-acyltransferase (267 aa).

It belongs to the transferase hexapeptide repeat family. LpxA subfamily. As to quaternary structure, homotrimer.

The protein resides in the cytoplasm. It carries out the reaction a (3R)-hydroxyacyl-[ACP] + UDP-N-acetyl-alpha-D-glucosamine = a UDP-3-O-[(3R)-3-hydroxyacyl]-N-acetyl-alpha-D-glucosamine + holo-[ACP]. Its pathway is glycolipid biosynthesis; lipid IV(A) biosynthesis; lipid IV(A) from (3R)-3-hydroxytetradecanoyl-[acyl-carrier-protein] and UDP-N-acetyl-alpha-D-glucosamine: step 1/6. Functionally, involved in the biosynthesis of lipid A, a phosphorylated glycolipid that anchors the lipopolysaccharide to the outer membrane of the cell. The polypeptide is Acyl-[acyl-carrier-protein]--UDP-N-acetylglucosamine O-acyltransferase (Cupriavidus pinatubonensis (strain JMP 134 / LMG 1197) (Cupriavidus necator (strain JMP 134))).